The chain runs to 1434 residues: Receptor-type tyrosine-protein phosphatase U (1434 aa).

The first 17 residues, 1–17, serve as a signal peptide directing secretion; it reads MRSARALLLALALRVCA. Residues 18–748 lie on the Extracellular side of the membrane; sequence LDSETPSAGC…QHSEEMGLIL (731 aa). The 163-residue stretch at 25-187 folds into the MAM domain; the sequence is AGCTFEEDDD…ILLLNYPCSK (163 aa). The N-linked (GlcNAc...) asparagine glycan is linked to Asn74. Positions 189–274 constitute an Ig-like C2-type domain; it reads PHFSRLGDVE…TQSSRGSGVS (86 aa). A disulfide bridge connects residues Cys209 and Cys263. 4 Fibronectin type-III domains span residues 287-382, 385-483, 484-590, and 597-677; these read PIAP…CAEP, APKG…TDED, VPGG…SAPT, and PSPL…TEAK. An N-linked (GlcNAc...) asparagine glycan is attached at Asn409. N-linked (GlcNAc...) asparagine glycosylation is present at Asn684. The chain crosses the membrane as a helical span at residues 749 to 769; it reads GICAGGLVVLIILLGAIIVVI. Residues 770 to 1434 lie on the Cytoplasmic side of the membrane; that stretch reads RKGKPVNMTK…LEYLESLETR (665 aa). The segment covering 824 to 839 has biased composition (polar residues); the sequence is RGDQRSSVVNESSSLL. Residues 824-851 are disordered; the sequence is RGDQRSSVVNESSSLLGGSPRRQCGRKG. Tyrosine-protein phosphatase domains are found at residues 876-1132 and 1164-1427; these read KTAE…ILEA and LREE…ALEY. Substrate contacts are provided by residues Glu1041, 1073–1079, and Gln1117; that span reads CSAGTGR. Cys1073 serves as the catalytic Phosphocysteine intermediate. Catalysis depends on Cys1368, which acts as the Phosphocysteine intermediate.

This sequence belongs to the protein-tyrosine phosphatase family. Receptor class 2B subfamily.

The protein resides in the cell junction. It localises to the cell membrane. The enzyme catalyses O-phospho-L-tyrosyl-[protein] + H2O = L-tyrosyl-[protein] + phosphate. In terms of biological role, tyrosine-protein phosphatase which dephosphorylates CTNNB1. May function in cell proliferation and migration and play a role in the maintenance of epithelial integrity. This is Receptor-type tyrosine-protein phosphatase U (PTPRU) from Gallus gallus (Chicken).